A 100-amino-acid polypeptide reads, in one-letter code: Large ribosomal subunit protein uL23 (100 aa).

It belongs to the universal ribosomal protein uL23 family. As to quaternary structure, part of the 50S ribosomal subunit. Contacts protein L29, and trigger factor when it is bound to the ribosome.

One of the early assembly proteins it binds 23S rRNA. One of the proteins that surrounds the polypeptide exit tunnel on the outside of the ribosome. Forms the main docking site for trigger factor binding to the ribosome. This is Large ribosomal subunit protein uL23 from Mycobacteroides abscessus (strain ATCC 19977 / DSM 44196 / CCUG 20993 / CIP 104536 / JCM 13569 / NCTC 13031 / TMC 1543 / L948) (Mycobacterium abscessus).